Consider the following 348-residue polypeptide: tRNA N6-adenosine threonylcarbamoyltransferase (348 aa).

Residues histidine 114 and histidine 118 each contribute to the Fe cation site. Substrate contacts are provided by residues 137–141 (LVSGG), aspartate 171, glycine 184, aspartate 188, and asparagine 283. Residue aspartate 311 participates in Fe cation binding.

The protein belongs to the KAE1 / TsaD family. Fe(2+) is required as a cofactor.

Its subcellular location is the cytoplasm. It carries out the reaction L-threonylcarbamoyladenylate + adenosine(37) in tRNA = N(6)-L-threonylcarbamoyladenosine(37) in tRNA + AMP + H(+). Functionally, required for the formation of a threonylcarbamoyl group on adenosine at position 37 (t(6)A37) in tRNAs that read codons beginning with adenine. Is involved in the transfer of the threonylcarbamoyl moiety of threonylcarbamoyl-AMP (TC-AMP) to the N6 group of A37, together with TsaE and TsaB. TsaD likely plays a direct catalytic role in this reaction. The polypeptide is tRNA N6-adenosine threonylcarbamoyltransferase (Nocardioides sp. (strain ATCC BAA-499 / JS614)).